The sequence spans 54 residues: Ovomucoid (54 aa).

The 51-residue stretch at 4-54 (VDCSDYPKPACTLEYMPLCGSDNKTYGNRCNFCNAVVDSNGTLTLSHFGKC) folds into the Kazal-like domain. 3 cysteine pairs are disulfide-bonded: Cys6–Cys36, Cys14–Cys33, and Cys22–Cys54. Asn43 carries an N-linked (GlcNAc...) asparagine glycan.

It is found in the secreted. This Dendrocygna viduata (White-faced whistling-duck) protein is Ovomucoid.